The sequence spans 288 residues: Prepilin leader peptidase/N-methyltransferase (288 aa).

Residues 14–34 (FITLATVLGLLVGSFLNVVVY) traverse the membrane as a helical segment. Residues cysteine 71, cysteine 74, cysteine 96, and cysteine 99 each coordinate Zn(2+). The next 6 helical transmembrane spans lie at 103-123 (ISVRYPLVEVGCALLSMVVAW), 127-147 (ASVEALVLLPLTWSLLALSLI), 158-178 (IVLPGLWLGLIVNYFGVWVPL), 182-202 (VCGAVVGYLSLWTVYWLFKLV), 227-247 (VLPLTLLLSSVLGALVGVYLL), and 254-274 (MGTAMPFGPYLAIAGWIAVLW).

Belongs to the peptidase A24 family. It depends on Zn(2+) as a cofactor.

It is found in the cell inner membrane. It carries out the reaction Typically cleaves a -Gly-|-Phe- bond to release an N-terminal, basic peptide of 5-8 residues from type IV prepilin, and then N-methylates the new N-terminal amino group, the methyl donor being S-adenosyl-L-methionine.. In terms of biological role, plays an essential role in type IV pili and type II pseudopili formation by proteolytically removing the leader sequence from substrate proteins and subsequently monomethylating the alpha-amino group of the newly exposed N-terminal phenylalanine. This chain is Prepilin leader peptidase/N-methyltransferase (pilD), found in Pseudomonas putida (Arthrobacter siderocapsulatus).